The chain runs to 361 residues: Probable dual-specificity RNA methyltransferase RlmN (361 aa).

The Proton acceptor role is filled by E102. In terms of domain architecture, Radical SAM core spans 108–344; sequence SGDRLTVCVS…VRWSKGLGAD (237 aa). C115 and C347 are oxidised to a cystine. Residues C122, C126, and C129 each contribute to the [4Fe-4S] cluster site. S-adenosyl-L-methionine-binding positions include 169–170, S199, 228–230, and N304; these read GE and SLH. C347 (S-methylcysteine intermediate) is an active-site residue.

It belongs to the radical SAM superfamily. RlmN family. [4Fe-4S] cluster serves as cofactor.

The protein localises to the cytoplasm. The catalysed reaction is adenosine(2503) in 23S rRNA + 2 reduced [2Fe-2S]-[ferredoxin] + 2 S-adenosyl-L-methionine = 2-methyladenosine(2503) in 23S rRNA + 5'-deoxyadenosine + L-methionine + 2 oxidized [2Fe-2S]-[ferredoxin] + S-adenosyl-L-homocysteine. It catalyses the reaction adenosine(37) in tRNA + 2 reduced [2Fe-2S]-[ferredoxin] + 2 S-adenosyl-L-methionine = 2-methyladenosine(37) in tRNA + 5'-deoxyadenosine + L-methionine + 2 oxidized [2Fe-2S]-[ferredoxin] + S-adenosyl-L-homocysteine. Specifically methylates position 2 of adenine 2503 in 23S rRNA and position 2 of adenine 37 in tRNAs. This is Probable dual-specificity RNA methyltransferase RlmN from Synechococcus elongatus (strain ATCC 33912 / PCC 7942 / FACHB-805) (Anacystis nidulans R2).